A 445-amino-acid chain; its full sequence is Glutamate-1-semialdehyde 2,1-aminomutase (445 aa).

Lysine 264 carries the post-translational modification N6-(pyridoxal phosphate)lysine.

It belongs to the class-III pyridoxal-phosphate-dependent aminotransferase family. HemL subfamily. The cofactor is pyridoxal 5'-phosphate.

The protein resides in the cytoplasm. The catalysed reaction is (S)-4-amino-5-oxopentanoate = 5-aminolevulinate. The protein operates within porphyrin-containing compound metabolism; protoporphyrin-IX biosynthesis; 5-aminolevulinate from L-glutamyl-tRNA(Glu): step 2/2. The chain is Glutamate-1-semialdehyde 2,1-aminomutase from Halobacterium salinarum (strain ATCC 29341 / DSM 671 / R1).